Reading from the N-terminus, the 644-residue chain is Threonine--tRNA ligase (644 aa).

The TGS domain maps to methionine 1–threonine 61. A catalytic region spans residues aspartate 243–proline 536. Zn(2+)-binding residues include cysteine 336, histidine 387, and histidine 513.

It belongs to the class-II aminoacyl-tRNA synthetase family. Homodimer. Requires Zn(2+) as cofactor.

It localises to the cytoplasm. It carries out the reaction tRNA(Thr) + L-threonine + ATP = L-threonyl-tRNA(Thr) + AMP + diphosphate + H(+). Its function is as follows. Catalyzes the attachment of threonine to tRNA(Thr) in a two-step reaction: L-threonine is first activated by ATP to form Thr-AMP and then transferred to the acceptor end of tRNA(Thr). Also edits incorrectly charged L-seryl-tRNA(Thr). This chain is Threonine--tRNA ligase, found in Maricaulis maris (strain MCS10) (Caulobacter maris).